A 126-amino-acid chain; its full sequence is Large-conductance mechanosensitive channel (126 aa).

The next 2 helical transmembrane spans lie at 14-34 (VIDLAVGVIIGSAFTAIVKSL) and 67-87 (GSFLNAIINFFIVAIVVFILV).

This sequence belongs to the MscL family. Homopentamer.

It is found in the cell membrane. In terms of biological role, channel that opens in response to stretch forces in the membrane lipid bilayer. May participate in the regulation of osmotic pressure changes within the cell. In Lactiplantibacillus plantarum (strain ATCC BAA-793 / NCIMB 8826 / WCFS1) (Lactobacillus plantarum), this protein is Large-conductance mechanosensitive channel.